Reading from the N-terminus, the 321-residue chain is Fe-S cluster assembly protein DRE2 (321 aa).

An N-terminal SAM-like domain region spans residues 1–131 (MERMLLLSPP…KPDFGPENIV (131 aa)). The tract at residues 132 to 213 (PLKLGKRKPV…EETLLDGEDM (82 aa)) is linker. Cys-223, Cys-234, Cys-237, and Cys-239 together coordinate [2Fe-2S] cluster. The fe-S binding site A stretch occupies residues 223 to 239 (CRPKAGKRRRACKDCTC). Residues Cys-284, Cys-287, Cys-295, and Cys-298 each contribute to the [4Fe-4S] cluster site. 2 consecutive short sequence motifs (cx2C motif) follow at residues 284–287 (CGNC) and 295–298 (CDGC). The tract at residues 284 to 298 (CGNCALGDAFRCDGC) is fe-S binding site B.

It belongs to the anamorsin family. As to quaternary structure, monomer. Interacts with TAH18. Interacts with MIA40. [2Fe-2S] cluster serves as cofactor. Requires [4Fe-4S] cluster as cofactor.

The protein resides in the cytoplasm. The protein localises to the mitochondrion intermembrane space. In terms of biological role, component of the cytosolic iron-sulfur (Fe-S) protein assembly (CIA) machinery required for the maturation of extramitochondrial Fe-S proteins. Part of an electron transfer chain functioning in an early step of cytosolic Fe-S biogenesis, facilitating the de novo assembly of a [4Fe-4S] cluster on the scaffold complex CFD1-NBP35. Electrons are transferred to DRE2 from NADPH via the FAD- and FMN-containing protein TAH18. TAH18-DRE2 are also required for the assembly of the diferric tyrosyl radical cofactor of ribonucleotide reductase (RNR), probably by providing electrons for reduction during radical cofactor maturation in the catalytic small subunit RNR2. In Coccidioides immitis (strain RS) (Valley fever fungus), this protein is Fe-S cluster assembly protein DRE2.